A 257-amino-acid polypeptide reads, in one-letter code: Phycoerythrobilin:ferredoxin oxidoreductase (257 aa).

This sequence belongs to the HY2 family.

It catalyses the reaction (3Z)-phycoerythrobilin + oxidized 2[4Fe-4S]-[ferredoxin] = 15,16-dihydrobiliverdin + reduced 2[4Fe-4S]-[ferredoxin] + 2 H(+). Its function is as follows. Catalyzes the two-electron reduction of the C2 and C3(1) diene system of 15,16-dihydrobiliverdin. The polypeptide is Phycoerythrobilin:ferredoxin oxidoreductase (pebB) (Prochlorococcus marinus (strain SARG / CCMP1375 / SS120)).